The following is a 275-amino-acid chain: Undecaprenyl-diphosphatase (275 aa).

A run of 8 helical transmembrane segments spans residues 1–21, 42–62, 80–100, 107–127, 147–167, 184–204, 214–234, and 249–269; these read MDWVYAIVYGIVEGITEFLPI, VKDAFEVVIQGGAILSVLVYY, TLWTGVLVATIPAVVLGLAFG, LFKPSVVAWALIVGGVLMWLI, SLLIGVLQCLALVWPGFSRSA, TKFSFYLGVPTLGGAALLNLV, IGLLNVVLGAGVSFVVAYLAI, and FAVYRVAVGVLILVLIATGVM.

The protein belongs to the UppP family.

It localises to the cell membrane. The enzyme catalyses di-trans,octa-cis-undecaprenyl diphosphate + H2O = di-trans,octa-cis-undecaprenyl phosphate + phosphate + H(+). Catalyzes the dephosphorylation of undecaprenyl diphosphate (UPP). Confers resistance to bacitracin. The protein is Undecaprenyl-diphosphatase of Deinococcus deserti (strain DSM 17065 / CIP 109153 / LMG 22923 / VCD115).